The following is a 931-amino-acid chain: Synaptopodin (931 aa).

Disordered regions lie at residues 56–78 (EEEGTSKSRVNHGTPPLSRAPAI) and 113–243 (ASVS…MEGY). S134 bears the Phosphoserine mark. The segment covering 136-148 (TEKDLKEAKERSQ) has biased composition (basic and acidic residues). 2 stretches are compositionally biased toward polar residues: residues 153 to 164 (QLTTPPSSNSRG) and 188 to 200 (PKLSQEALQTGHP). Residues S202, S222, and S258 each carry the phosphoserine modification. Over residues 214 to 232 (PTSPSKPGSPKHSSSQSPS) the composition is skewed to low complexity. The segment at 280-420 (GLHLSQNRET…SSSGPPAADL (141 aa)) is disordered. Polar residues-rich tracts occupy residues 282-293 (HLSQNRETQQSS) and 309-370 (INQN…NTPS). The segment covering 373-384 (DGQRPVPAEEVR) has biased composition (basic and acidic residues). A phosphoserine mark is found at S490 and S514. Disordered stretches follow at residues 542 to 591 (RRPL…KGQV) and 691 to 711 (SPRIQAKPKPKPNQNLSEASG). T549 is modified (phosphothreonine). Positions 551–554 (PPTY) match the PPxY motif motif. Positions 556 to 568 (ETLSTAPVASQVR) are enriched in polar residues. Residue S569 is modified to Phosphoserine. Low complexity predominate over residues 569-580 (SPPSYSTLYPSS). Residues 570 to 573 (PPSY) carry the PPxY motif motif. S691, S742, S746, and S767 each carry phosphoserine. T771 is subject to Phosphothreonine. Residues 775–918 (SLYHGYLPEN…RPSFSTRNAG (144 aa)) form a disordered region. A compositionally biased stretch (low complexity) spans 816–841 (SSRATSSRASSRTVSPRAASPAKPSS). Phosphoserine is present on S835. R850 carries the post-translational modification Omega-N-methylarginine. A Phosphoserine modification is found at S856. The segment covering 874–895 (VQDSLQPTAVSPTYSSDISPVS) has biased composition (polar residues).

This sequence belongs to the synaptopodin family. As to quaternary structure, interacts with BAIAP1. Interacts with actin. Interacts (via PPxY motifs) with WWC1 (via WW domains). Post-translationally, O-glycosylated. As to expression, expressed at high levels in brain and at moderate, but still significant levels in the heart, skeletal muscle, lung and kidney. In brain, expressed in the cerebral cortex, hippocampus, olfactory bulb and striatum.

The protein resides in the cytoplasm. It is found in the cytoskeleton. Its subcellular location is the cell junction. The protein localises to the tight junction. It localises to the perikaryon. The protein resides in the cell projection. It is found in the dendritic spine. Its subcellular location is the postsynaptic density. The protein localises to the synapse. It localises to the cytosol. Functionally, actin-associated protein that may play a role in modulating actin-based shape and motility of dendritic spines and renal podocyte foot processes. Seems to be essential for the formation of spine apparatuses in spines of telencephalic neurons, which is involved in synaptic plasticity. The chain is Synaptopodin (Synpo) from Rattus norvegicus (Rat).